Consider the following 436-residue polypeptide: Probable ABC transporter binding protein NosD (436 aa).

Positions 1–27 (MFKAQATFSRYSAAVSLLLLFSGAAQA) are cleaved as a signal peptide. PbH1 repeat units follow at residues 85–113 (APDV…FILP), 115–136 (AERA…FVDG), 137–166 (TRDV…HLFA), 167–188 (VSGA…YIDT), 189–210 (SNGN…HYMF), 233–255 (SRKL…LMNY), 293–314 (SLFN…HLTA), and 316–354 (SEDN…YWSD).

The protein belongs to the NosD family. In terms of assembly, the complex may be composed of an ATP-binding protein (NosF), a transmembrane protein (NosY) and a solute-binding protein (NosD).

It is found in the periplasm. Functionally, required for the assembly of the copper chromophores of nitrous oxide reductase. Could be part of the ABC transporter complex NosDFY. The chain is Probable ABC transporter binding protein NosD from Stutzerimonas stutzeri (Pseudomonas stutzeri).